Reading from the N-terminus, the 346-residue chain is L-threonine dehydratase catabolic TdcB (346 aa).

59–60 (FT) contributes to the AMP binding site. Lysine 64 is modified (N6-(pyridoxal phosphate)lysine). Residues glutamine 94, 125–126 (GY), and asparagine 321 contribute to the AMP site.

This sequence belongs to the serine/threonine dehydratase family. As to quaternary structure, in the native structure, TdcB is in a dimeric form, whereas in the TdcB-AMP complex, it exists in a tetrameric form (dimer of dimers). It depends on pyridoxal 5'-phosphate as a cofactor.

The enzyme catalyses L-threonine = 2-oxobutanoate + NH4(+). It participates in amino-acid degradation; L-threonine degradation via propanoate pathway; propanoate from L-threonine: step 1/4. With respect to regulation, each protein molecule can bind up to four molecules of AMP, which act as an allosteric activator to the enzyme. In terms of biological role, catalyzes the anaerobic formation of alpha-ketobutyrate and ammonia from threonine in a two-step reaction. The first step involved a dehydration of threonine and a production of enamine intermediates (aminocrotonate), which tautomerizes to its imine form (iminobutyrate). Both intermediates are unstable and short-lived. The second step is the nonenzymatic hydrolysis of the enamine/imine intermediates to form 2-ketobutyrate and free ammonia. In the low water environment of the cell, the second step is accelerated by RidA. The protein is L-threonine dehydratase catabolic TdcB (tdcB) of Staphylococcus aureus (strain Mu50 / ATCC 700699).